A 156-amino-acid chain; its full sequence is Small ribosomal subunit protein uS7 (156 aa).

This sequence belongs to the universal ribosomal protein uS7 family. Part of the 30S ribosomal subunit. Contacts proteins S9 and S11.

Functionally, one of the primary rRNA binding proteins, it binds directly to 16S rRNA where it nucleates assembly of the head domain of the 30S subunit. Is located at the subunit interface close to the decoding center, probably blocks exit of the E-site tRNA. The polypeptide is Small ribosomal subunit protein uS7 (Laribacter hongkongensis (strain HLHK9)).